We begin with the raw amino-acid sequence, 578 residues long: Endonuclease GajA (578 aa).

The tract at residues 1–341 is ATPase domain; that stretch reads MKFSNITIKN…RLIRVHSTEK (341 aa). 32-36 contributes to the ATP binding site; that stretch reads DIGKT. The tract at residues 370 to 510 is toprim domain; it reads LFAERVLLIE…LGERIYLSEI (141 aa). A divalent metal cation-binding residues include Glu379, Glu383, Asp463, Glu464, and Glu513.

In terms of assembly, homotetramer. Forms the core of the anti-phage defense complex. Interacts with GajB; 2 GajB dimers dock at opposite sides of the GajA complex to form a 4:4 GajA-GajB assembly (GajAB). GajAB interacts with Bacillus phage Phi3T Gad1 protein; this interaction forms a 4:4:8 GajAB-Gad1 complex and leads to GajAB inhibition. The cofactor is Mg(2+). Mn(2+) serves as cofactor.

Its activity is regulated as follows. Endonuclease activity inhibited by all NTPs, dNTPs, NDPs (at 0.5 mM, UDP not tested) and AMP-PNP; not inhibited by any tested NMP, dNMP or nucleoside. Inhibited by 100 mM NaCl, 100 mM KCl, 0.5 mM Co(2+) and 0.5 mM Ni(2+). Functionally, component of antiviral defense system Gabija type I, composed of GajA and GajB. Endonuclease that nicks double-stranded DNA within the sequence 5'-TNNNCGGGNNA-3' in the absence of nucleotides (NTP, dNTP and NDPs), cleaving after C-1. Has no detected ATPase activity. Expression of Gabija type I in B.subtilis (strain BEST7003) confers resistance to phages phi105, phi29, rho14, SpBeta and SBSphiC. Expression of Gabija type I in E.coli B (strain ATCC 11303) confers resistance to phage T7. It is thought that this enzyme is strongly suppressed during physiological growth (in E.coli total nucleotide concentration is over 8.7 mM in mid-log phase), but during viral replication, when nucleotides are rapidly consumed, it is de-suppressed and degrades target DNA. In Bacillus cereus (strain VD045), this protein is Endonuclease GajA.